The primary structure comprises 432 residues: Trigger factor (432 aa).

Residues 161 to 246 enclose the PPIase FKBP-type domain; that stretch reads DDRVTIDFVG…LKKIENMVLP (86 aa).

It belongs to the FKBP-type PPIase family. Tig subfamily.

The protein resides in the cytoplasm. It carries out the reaction [protein]-peptidylproline (omega=180) = [protein]-peptidylproline (omega=0). In terms of biological role, involved in protein export. Acts as a chaperone by maintaining the newly synthesized protein in an open conformation. Functions as a peptidyl-prolyl cis-trans isomerase. In Haemophilus influenzae (strain ATCC 51907 / DSM 11121 / KW20 / Rd), this protein is Trigger factor (tig).